Reading from the N-terminus, the 379-residue chain is Cytochrome b (379 aa).

4 helical membrane passes run Phe-33–Met-53, Trp-77–Ile-98, Trp-113–Leu-133, and Phe-178–Leu-198. Heme b contacts are provided by His-83 and His-97. Heme b contacts are provided by His-182 and His-196. His-201 is a binding site for a ubiquinone. Helical transmembrane passes span Tyr-226–Tyr-246, Leu-288–His-308, Ala-320–Gly-340, and Tyr-347–Pro-367.

The protein belongs to the cytochrome b family. As to quaternary structure, the cytochrome bc1 complex contains 3 respiratory subunits (MT-CYB, CYC1 and UQCRFS1), 2 core proteins (UQCRC1 and UQCRC2) and probably 6 low-molecular weight proteins. It depends on heme b as a cofactor.

It localises to the mitochondrion inner membrane. In terms of biological role, component of the ubiquinol-cytochrome c reductase complex (complex III or cytochrome b-c1 complex) that is part of the mitochondrial respiratory chain. The b-c1 complex mediates electron transfer from ubiquinol to cytochrome c. Contributes to the generation of a proton gradient across the mitochondrial membrane that is then used for ATP synthesis. The polypeptide is Cytochrome b (mt-cyb) (Anguilla interioris (Highlands long-finned eel)).